Reading from the N-terminus, the 183-residue chain is MDIDPYKEFGASVELLSFLPSDFFPSIRDLLDTASALYREALESPEHCSPHHTALRQAILCWGELMNLATWVGGNLEDPASRELVVSYVNVNMGLKLRQILWFHISCLTFGRETVLEYLVSFGVWIRTPTAYRPPNAPILSTLPENAVVRRRGRSPRRRTPSPRRRRSQSPRRRRSQSRGSQC.

The tract at residues 143–183 is disordered; it reads LPENAVVRRRGRSPRRRTPSPRRRRSQSPRRRRSQSRGSQC. Positions 149–177 are enriched in basic residues; sequence VRRRGRSPRRRTPSPRRRRSQSPRRRRSQ. Phosphoserine; by host occurs at positions 155, 162, and 170. The stretch at 155–161 is one 1; half-length repeat; it reads SPRRRTP. The segment at 155 to 177 is 3 X 8 AA repeats of S-P-R-R-R-[PR]-S-Q; it reads SPRRRTPSPRRRRSQSPRRRRSQ. Residues 158–175 carry the Bipartite nuclear localization signal motif; sequence RRTPSPRRRRSQSPRRRR. A run of 2 repeats spans residues 162-169 and 170-177. The interval 177-183 is RNA binding; the sequence is QSRGSQC.

It belongs to the orthohepadnavirus core antigen family. In terms of assembly, homodimerizes, then multimerizes. Interacts with cytosol exposed regions of viral L glycoprotein present in the reticulum-to-Golgi compartment. Interacts with human FLNB. Phosphorylated form interacts with host importin alpha; this interaction depends on the exposure of the NLS, which itself depends upon genome maturation and/or phosphorylation of the capsid protein. Interacts with host NUP153. Post-translationally, phosphorylated by host SRPK1, SRPK2, and maybe protein kinase C or GAPDH. Phosphorylation is critical for pregenomic RNA packaging. Protein kinase C phosphorylation is stimulated by HBx protein and may play a role in transport of the viral genome to the nucleus at the late step during the viral replication cycle.

Its subcellular location is the virion. The protein localises to the host cytoplasm. Functionally, self assembles to form an icosahedral capsid. Most capsids appear to be large particles with an icosahedral symmetry of T=4 and consist of 240 copies of capsid protein, though a fraction forms smaller T=3 particles consisting of 180 capsid proteins. Entering capsids are transported along microtubules to the nucleus. Phosphorylation of the capsid is thought to induce exposure of nuclear localization signal in the C-terminal portion of the capsid protein that allows binding to the nuclear pore complex via the importin (karyopherin-) alpha and beta. Capsids are imported in intact form through the nuclear pore into the nuclear basket, where it probably binds NUP153. Only capsids that contain the mature viral genome can release the viral DNA and capsid protein into the nucleoplasm. Immature capsids get stuck in the basket. Capsids encapsulate the pre-genomic RNA and the P protein. Pre-genomic RNA is reverse-transcribed into DNA while the capsid is still in the cytoplasm. The capsid can then either be directed to the nucleus, providing more genomes for transcription, or bud through the endoplasmic reticulum to provide new virions. The sequence is that of Capsid protein from Homo sapiens (Human).